The following is a 216-amino-acid chain: uncharacterized protein (216 aa).

A signal peptide spans 1–17; sequence MLKKIIILFLGMFLLSA. Residue Cys-18 is the site of N-palmitoyl cysteine attachment. Residue Cys-18 is the site of S-diacylglycerol cysteine attachment. Residues 133-162 are a coiled coil; that stretch reads SDKEKKIQEELNQIKAMLRETKRDISKYTC.

It is found in the cell membrane. This is an uncharacterized protein from Rickettsia conorii (strain ATCC VR-613 / Malish 7).